We begin with the raw amino-acid sequence, 162 residues long: CASP-like protein 1C1 (162 aa).

Over 1 to 7 (MAKLHRL) the chain is Cytoplasmic. A helical membrane pass occupies residues 8–28 (ISAVLRLAAAGAAAAAAIIMV). Over 29 to 50 (TSHETTSFFGIEMEAKYSYTPS) the chain is Extracellular. The chain crosses the membrane as a helical span at residues 51-71 (FVFFVVAFAVAFAYSLLALLA). At 72–79 (RPGSTASR) the chain is on the cytoplasmic side. The chain crosses the membrane as a helical span at residues 80–100 (LLLLSDVMVGMLLTGAVAATG). Over 101 to 128 (AISQVGKSGNEHAGWLPICAQVQAYCSH) the chain is Extracellular. A helical membrane pass occupies residues 129-149 (VMGALIAGFVSLLLYFLIIMY). Over 150-162 (SLHAVAEPLCSCH) the chain is Cytoplasmic.

It belongs to the Casparian strip membrane proteins (CASP) family. As to quaternary structure, homodimer and heterodimers.

Its subcellular location is the cell membrane. This is CASP-like protein 1C1 from Sorghum bicolor (Sorghum).